We begin with the raw amino-acid sequence, 1032 residues long: Baseplate wedge protein gp7 (1032 aa).

Residues Leu1012 to Glu1032 form a disordered region.

This sequence belongs to the T4likevirus baseplate wedge protein gp7 family. In terms of assembly, heterotrimer with gp6; assembles as a (gp6)2-gp7 heterotrimeric molecule. The (gp6)2-gp7 heterotrimeric molecule further interacts with gp25 and gp53. The gp25-(gp6)2-gp7 module is involved in sheath contraction. Interacts with gp8. Binds to gp10 homotrimer; disulfide-linked. Heteromultimer with gp10; a gp10 molecule is disulfide-linked to gp7 and the other two remaining gp10 molecules form a disulfide bond. Part of the baseplate macromolecular complex which consists of gp5, gp5.4, gp27 (central spike complex); gp6, gp25, gp53 (inner baseplate); gp7, gp8 (intermediate baseplate); gp9, gp10, gp11, gp12 (peripheral); gp48 and gp54 (proximal region of the tail tube).

Its subcellular location is the virion. Functionally, intermediate/inner baseplate protein. The gp25-(gp6)2-gp7 module is involved in sheath contraction. Involved in the tail assembly. The polypeptide is Baseplate wedge protein gp7 (7) (Enterobacteria phage T4 (Bacteriophage T4)).